The following is a 303-amino-acid chain: Crk-like protein (303 aa).

The SH2 domain maps to 14 to 102 (WYMGPVSRQE…LDTTTLIEPA (89 aa)). One can recognise an SH3 1 domain in the interval 123 to 183 (ENLEYVRTLY…PVPYVEKLVR (61 aa)). Tyr-127 bears the Phosphotyrosine mark. The interval 184–204 (SSPHGKHGNRNSNSYGIPEPA) is disordered. A Phosphotyrosine modification is found at Tyr-207. The SH3 2 domain occupies 235-296 (NGPVFAKAIQ…PFTHVKIFDP (62 aa)).

This sequence belongs to the CRK family. Interacts with INPP5D/SHIP1. Interacts with DOCK2 and EPOR. Interacts with phosphorylated CBLB and IRS4. Interacts with BCAR1/CAS and NEDD9/HEF1.

May mediate the transduction of intracellular signals. This Rattus norvegicus (Rat) protein is Crk-like protein.